Reading from the N-terminus, the 137-residue chain is Large ribosomal subunit protein bL17 (137 aa).

Belongs to the bacterial ribosomal protein bL17 family. In terms of assembly, part of the 50S ribosomal subunit. Contacts protein L32.

The polypeptide is Large ribosomal subunit protein bL17 (Caulobacter sp. (strain K31)).